The chain runs to 466 residues: Ribulose bisphosphate carboxylase large chain (466 aa).

Residue Lys-4 is modified to N6,N6,N6-trimethyllysine. Substrate-binding residues include Asn-113 and Thr-163. The active-site Proton acceptor is the Lys-165. Substrate is bound at residue Lys-167. Lys-191, Asp-193, and Glu-194 together coordinate Mg(2+). An N6-carboxylysine modification is found at Lys-191. Residue His-284 is the Proton acceptor of the active site. 3 residues coordinate substrate: Arg-285, His-317, and Ser-369.

This sequence belongs to the RuBisCO large chain family. Type I subfamily. In terms of assembly, heterohexadecamer of 8 large chains and 8 small chains; disulfide-linked. The disulfide link is formed within the large subunit homodimers. The cofactor is Mg(2+). The disulfide bond which can form in the large chain dimeric partners within the hexadecamer appears to be associated with oxidative stress and protein turnover.

The protein localises to the plastid. The protein resides in the chloroplast. The catalysed reaction is 2 (2R)-3-phosphoglycerate + 2 H(+) = D-ribulose 1,5-bisphosphate + CO2 + H2O. The enzyme catalyses D-ribulose 1,5-bisphosphate + O2 = 2-phosphoglycolate + (2R)-3-phosphoglycerate + 2 H(+). Its function is as follows. RuBisCO catalyzes two reactions: the carboxylation of D-ribulose 1,5-bisphosphate, the primary event in carbon dioxide fixation, as well as the oxidative fragmentation of the pentose substrate in the photorespiration process. Both reactions occur simultaneously and in competition at the same active site. The sequence is that of Ribulose bisphosphate carboxylase large chain from Pinguicula caerulea (Blueflower butterwort).